We begin with the raw amino-acid sequence, 436 residues long: Adenylosuccinate synthetase (436 aa).

GTP-binding positions include 21 to 27 and 49 to 51; these read GDEGKGK and GHT. The active-site Proton acceptor is Asp22. Mg(2+) contacts are provided by Asp22 and Gly49. Residues 22–25, 47–50, Thr135, Arg149, Gln230, Thr245, and Arg309 contribute to the IMP site; these read DEGK and NAGH. The active-site Proton donor is the His50. Residue 305-311 participates in substrate binding; that stretch reads TTTGRPR. Residues Arg311, 337-339, and 423-425 each bind GTP; these read KVD and SSG.

Belongs to the adenylosuccinate synthetase family. As to quaternary structure, homodimer. Requires Mg(2+) as cofactor.

The protein localises to the cytoplasm. It carries out the reaction IMP + L-aspartate + GTP = N(6)-(1,2-dicarboxyethyl)-AMP + GDP + phosphate + 2 H(+). It participates in purine metabolism; AMP biosynthesis via de novo pathway; AMP from IMP: step 1/2. Functionally, plays an important role in the de novo pathway of purine nucleotide biosynthesis. Catalyzes the first committed step in the biosynthesis of AMP from IMP. This chain is Adenylosuccinate synthetase, found in Thermoplasma volcanium (strain ATCC 51530 / DSM 4299 / JCM 9571 / NBRC 15438 / GSS1).